The following is a 290-amino-acid chain: Microtubule-associated protein P320 (290 aa).

8 repeats span residues 1–38 (SEYR…PIDP), 39–76 (SEYR…PIDP), 77–114 (SEYR…PIDP), 115–152 (SEYR…PIDP), 153–190 (SEYR…PIDP), 191–228 (SEYR…PIDP), 229–266 (SEYR…PIDP), and 267–290 (SEYR…DESH). The interval 251–290 (SHFLTTTHEAYKPIDPSEYRQKRTVGEEVTTDMRHVDESH) is disordered. Residues 259–290 (EAYKPIDPSEYRQKRTVGEEVTTDMRHVDESH) are compositionally biased toward basic and acidic residues.

The protein resides in the cytoplasm. It is found in the cytoskeleton. This Trypanosoma brucei brucei protein is Microtubule-associated protein P320.